We begin with the raw amino-acid sequence, 264 residues long: Glutamate racemase (264 aa).

Residues 10–11 (DS) and 42–43 (YG) contribute to the substrate site. Catalysis depends on cysteine 73, which acts as the Proton donor/acceptor. 74–75 (NT) contributes to the substrate binding site. Cysteine 183 functions as the Proton donor/acceptor in the catalytic mechanism. 184–185 (TH) is a substrate binding site.

This sequence belongs to the aspartate/glutamate racemases family.

It catalyses the reaction L-glutamate = D-glutamate. Its pathway is cell wall biogenesis; peptidoglycan biosynthesis. Its function is as follows. Provides the (R)-glutamate required for cell wall biosynthesis. This Streptococcus pyogenes serotype M18 (strain MGAS8232) protein is Glutamate racemase.